The chain runs to 261 residues: Troponin T, slow skeletal muscle (261 aa).

The segment covering 1-30 (MSDTEEQEYEEEQAEDEEAVEEEAPEEPEP) has biased composition (acidic residues). Disordered regions lie at residues 1 to 61 (MSDT…ERVD) and 108 to 152 (ERAE…KKKV). Ser2 is modified (phosphoserine; by CK2). A compositionally biased stretch (basic and acidic residues) spans 31–40 (VAEREEERPK). Residues 42 to 54 (SRPVVPPLIPPKI) show a composition bias toward pro residues. The span at 108-148 (ERAEQQRFRTEKERERQAKLAEEKMRKEEEEAKKRAEDDAK) shows a compositional bias: basic and acidic residues.

Belongs to the troponin T family. In terms of assembly, interacts with TPM3. As to expression, expressed in soleus muscle. Isoform 4 is predominantly expressed in fast muscles.

Troponin T is the tropomyosin-binding subunit of troponin, the thin filament regulatory complex which confers calcium-sensitivity to striated muscle actomyosin ATPase activity. This Rattus norvegicus (Rat) protein is Troponin T, slow skeletal muscle (Tnnt1).